Here is a 501-residue protein sequence, read N- to C-terminus: Endonuclease domain-containing 1 protein (501 aa).

The N-terminal stretch at 1 to 21 (MGCARWLALGGLLALAGLLQA) is a signal peptide. Lys-408 carries the N6-acetyllysine modification.

The protein belongs to the DNA/RNA non-specific endonuclease family. In terms of assembly, interacts with RNF26; this interaction is important to modulate innate immune signaling through the cGAS-STING pathway.

The protein localises to the secreted. Its function is as follows. May act as a DNase and a RNase. Plays a role in the modulation of innate immune signaling through the cGAS-STING pathway by interacting with RNF26. This is Endonuclease domain-containing 1 protein (Endod1) from Mus musculus (Mouse).